Reading from the N-terminus, the 316-residue chain is Phosducin-like protein 1 (316 aa).

A disordered region spans residues 1-61 (MEQNILNSIL…EDGDKEYEVD (61 aa)). Over residues 12–41 (KFGDGDQERSDIRHNDSGDENDNHSDHEGN) the composition is skewed to basic and acidic residues. Over residues 49–61 (EGNEDGDKEYEVD) the composition is skewed to acidic residues. In terms of domain architecture, Phosducin spans 95-290 (SDYAEHREKQ…LLSSYDIIPN (196 aa)). A coiled-coil region spans residues 102–156 (EKQKQKYLQKKYETQKMLEKMCFTTRDQPPPTEEENQLDSDDDDLERIRKARMEQ). The segment at 175–316 (FGYFKQIDSS…RPESDDDNDD (142 aa)) is thioredoxin fold. The disordered stretch occupies residues 293–316 (KAKNSNWETSLSRKRPESDDDNDD).

It belongs to the phosducin family.

The protein resides in the cytoplasm. In terms of biological role, required for normal chemotaxis in response to cAMP and folate. Required for the heterodimerization of the G protein beta and gamma subunits gpbA and gpgA, which is itself thought to be necessary for prenylation of the gamma subunit gpgA and its association with plasma membranes. This is Phosducin-like protein 1 (phlp1) from Dictyostelium discoideum (Social amoeba).